Here is a 670-residue protein sequence, read N- to C-terminus: CLK4-associating serine/arginine rich protein (670 aa).

The residue at position 101 (Ser101) is a Phosphoserine. 2 disordered regions span residues Thr171–Asp232 and Glu258–His670. A compositionally biased stretch (acidic residues) spans Pro182–Asn214. Positions Arg265–Lys283 are enriched in basic residues. Phosphoserine is present on residues Ser285 and Ser294. Residues Ala290 to Ser313 are compositionally biased toward basic and acidic residues. Thr327 is modified (phosphothreonine). A phosphoserine mark is found at Ser331 and Ser335. Residues Ala340–Lys355 are compositionally biased toward low complexity. Positions Pro356–Pro365 are enriched in pro residues. Residues Ser378–Ser400 show a composition bias toward low complexity. 2 stretches are compositionally biased toward basic residues: residues Ser411–Ser443 and Arg481–Ser491. Low complexity predominate over residues Ser492 to Ser529. Residue Ser543 is modified to Phosphoserine. Thr569 is subject to Phosphothreonine. Residues Ala581–Ser643 adopt a coiled-coil conformation. Basic and acidic residues-rich tracts occupy residues Phe586 to Ala613 and Lys621 to Tyr637. Positions Ser638–Arg647 are enriched in low complexity. The span at Ser655–His670 shows a compositional bias: basic residues.

The protein belongs to the splicing factor SR family. In terms of assembly, probably interacts with CLK4. Post-translationally, phosphorylated in vitro by CLK4.

The protein localises to the nucleus. In terms of biological role, probably functions as an alternative splicing regulator. May regulate the mRNA splicing of genes such as CLK1. May act by regulating members of the CLK kinase family. In Bos taurus (Bovine), this protein is CLK4-associating serine/arginine rich protein (CLASRP).